The primary structure comprises 3253 residues: tRNA nuclease CdiA (3253 aa).

The signal sequence occupies residues 1-32 (MHQPPVRFPYRLLSYLISTIIAGQPLLPAVGA). The interval 36–322 (PQNGAGMDKA…AGGNLSVTGT (287 aa)) is two-partner system transport domain (TPS). The segment at 351-1384 (GELTAGQNAM…ITIRTGHLLN (1034 aa)) is FHA-1. The interval 1385–1656 (QREGINETKS…DLASGIVEGN (272 aa)) is receptor binding domain (RBD). The tract at residues 1657-1841 (YPLPSGNNGY…LSPKDVTLQN (185 aa)) is YP domain. Residues 1842 to 1902 (GSIISGQNVH…GLKAMGDINN (61 aa)) are periplasmic FHA-1 repeat (pFR). Residues 1944-2548 (TYTGSIASVS…TSKYDSKQTS (605 aa)) form an FHA-2 region. Disordered stretches follow at residues 2228–2252 (GSSK…TIGS), 2362–2410 (TGDP…GKNR), 2483–2503 (GSEK…GKTV), and 2687–2712 (IRDR…DSIS). Polar residues-rich tracts occupy residues 2240–2252 (GTTQ…TIGS), 2368–2403 (TGVS…NLSV), and 2490–2503 (TEWT…GKTV). The pretoxin (PT) domain stretch occupies residues 2888 to 2930 (SDLSEEQKQTISTLATVSAGLAGGLTGNSSASAAVGAQSGKNA). The short motif at 2931-2934 (VDNN) is the VDNN CT cleavage motif element. Residues 2931–3253 (VDNNYLSVSE…TGIVSNFHPK (323 aa)) form a C-terminal effector domain (CT) region.

It in the N-terminal section; belongs to the CdiA toxin family. In the C-terminal section; belongs to the bacterial EndoU family. Forms a 1:1 complex with cognate immunity protein CdiI-STECO31. TRNase activity is metal-independent. serves as cofactor. Post-translationally, the CT domain is cleaved upon binding to receptor Tsx on target cells.

The protein resides in the secreted. It is found in the target cell. The protein localises to the target cell cytoplasm. In terms of biological role, toxic component of a toxin-immunity protein module, which functions as a cellular contact-dependent growth inhibition (CDI) system. CDI modules allow bacteria to communicate with and inhibit the growth of closely related neighboring target bacteria in a contact-dependent fashion (target cell counts decrease 1000- to 10000-fold with this CDI). Uses outer membrane nucleoside transporter Tsx on target cells as a receptor. Gains access to the cytoplasm of target cells by using integral inner membrane protein PTS system glucose-specific EIICB component (ptsG). Targeting of the C-terminal domain (CT) domain (residues 2931-3253) in the absence of immunity protein inhibits cell growth and causes tRNA(UUC-Glu) cleavage; expression of cognate immunity protein CdiI-STECO31 neutralizes growth inhibition leaving tRNA(UUC-Glu) is intact, whereas non-cognate immunity proteins do not confer protection. The CT domain cleaves tRNA; it is most active against tRNA(UUC-Glu), but also has modest activity against tRNA(GUC-Asp), tRNA(UUG-Gln), tRNA(CCC-Gly), tRNA(UCC-Gly), tRNA(GCC-Gly), tRNA(UUU-Lys), tRNA(GGU-Thr) and tRNA(CCA-Trp); tRNA cleavage is inhibited by cognate immunity protein CdiI. Cleavage of tRNA(UUC-Glu) occurs in the anticodon loop between cytosine(37) and 2-methyladenosine(38) (C37-m2A38) and probably also occurs in the anticodon loop of other tRNAs as well. The CdiA protein is thought to be exported from the cell through the central lumen of CdiB, the other half of its two-partner system (TPS). The TPS domain probably remains associated with CdiB while the FHA-1 domain forms an extended filament (33 nm long) with the receptor-binding domain (RBD) at its extremity; in the secretion arrested state the C-terminus of the RBD and YP domains form a hairpin-like structure as the FHA-2, PT and CT domains are periplasmic. The YP domain is probably responsible for this arrest at the point where it re-enters the host cell periplasm. Upon binding to a target cell outer membrane receptor (Tsx for this CDI) a signal is transmitted to activate secretion. The filament becomes about 5 nm longer, the rest of CdiA is secreted and the FHA-2 domain becomes stably associated with the target cell's outer membrane where it facilitates entry of the toxic CT domain into the target cell periplasm. From there the toxic CT domain is cleaved and gains access to the target cell cytoplasm via an inner membrane protein (PTS system glucose-specific EIICB component, ptsG for this CDI). This Escherichia coli (strain STEC_O31) protein is tRNA nuclease CdiA.